The chain runs to 573 residues: Formate--tetrahydrofolate ligase 3 (573 aa).

ATP is bound at residue 66-73; the sequence is TPLGEGKT.

It belongs to the formate--tetrahydrofolate ligase family.

The catalysed reaction is (6S)-5,6,7,8-tetrahydrofolate + formate + ATP = (6R)-10-formyltetrahydrofolate + ADP + phosphate. It functions in the pathway one-carbon metabolism; tetrahydrofolate interconversion. The polypeptide is Formate--tetrahydrofolate ligase 3 (Rubrobacter xylanophilus (strain DSM 9941 / JCM 11954 / NBRC 16129 / PRD-1)).